The primary structure comprises 486 residues: MATFKDTCYYYKRINKLNHAVLKLGVNDTWRPSPPTRYKGWCLDCCQHTDLTYCRGCTMYHVCQWCSQYGRCFLDSEPHLLRMRTFKNEVTKNDLMNLIDMYDTLFPINQRIVDKFMNSTRQHKCRNECITQWYNHLLMPITLQSLSIELDGDVYYVFGYYDSMSDINQTPFSFTNLIDMYDKLLLDNINFNRMSFLPVTLQQEYALRYFSKSRFISEKRKCVSDLHFSVNVIENLHNPSFKIQITRNCSDFSSDWNGVCKLVKDVSAYFNVLKTSHIEFYSISTRCRVFTQHKLKIASKHIKPNYVTSNHKTSATEVHNCKWCSINNSYTVWNDFRVKKIYDNIFNFLRALVKSNANVGHCSSQEKIYEYIKDVLDVCDDEKWKIAVTEIFNCLEPVELNNVKYALFNHEVNWDVINLLVQSVDKVPQILTLNDIVIIMKSIIYEWFDIRYMRNTPMTTFTVDKLRRLCTGVKTVDYDSGISDVE.

Positions 1-81 (MATFKDTCYY…CFLDSEPHLL (81 aa)) are RNA-binding. Positions 42–79 (CLDCCQHTDLTYCRGCTMYHVCQWCSQYGRCFLDSEPH) are zinc-binding domain. Residues 82-176 (RMRTFKNEVT…INQTPFSFTN (95 aa)) are important for cytoskeleton localization. The segment at 317-486 (EVHNCKWCSI…DYDSGISDVE (170 aa)) is interaction with host IRF3. Positions 479–483 (DSGIS) match the IKBKB-like degron (ILD) motif motif. Residues 480–483 (SGIS) carry the pLxIS motif motif.

Belongs to the rotavirus NSP1 family. In terms of assembly, interacts (via C-terminus) with host IRF3; this interaction leads to IRF3 degradation. Interacts with host IRF7; this interaction leads to IRF7 degradation. Interacts with host CUL1 and CUL3. Interacts with host BTRC. Post-translationally, the C-terminal region is phosphorylated by host CKII/CSNK2A1. Phosphorylation of the DSGXS motif is essential for host NF-kappa-B inhibition.

Its subcellular location is the host cytoplasm. It localises to the host cytoskeleton. In terms of biological role, plays a role in the inhibition of host innate immunity by inducing the degradation of key host factors required to activate interferon production such as IRF3, IRF5 or IRF7. Associates with components of cullin RING ligases (CRLs) including CUL1 or CUL3, which are essential multisubunit ubiquitination complexes, to modulate their activities. Recognizes the host NF-kappa-B regulator BTRC through the presence of a DSGXS motif in the C-terminal substrate recognition domain. The sequence is that of Non-structural protein 1 from Rotavirus A (strain RVA/Human/United States/D/1974/G1P1A[8]) (RV-A).